The chain runs to 464 residues: MKNTPTQLEPNVPVTRSHSMGFVILISCAAGLGGLLYGYDTAVISGAIGFLKDLYSLSPFMEGLVISSIMIGGVVGVGISGFLSDRFGRRKILMTAALLFAISAIVSALSQDVSTLIIARIIGGLGIGMGSSLSVTYITEAAPPAIRGSLSSLYQLFTILGISATYFINLAVQRSGTYEWGVHTGWRWMLAYGMVPSVIFFLVLLVVPESPRWLAKAGKTNEALKILTRINGETVAKEELKNIENSLKIEQMGSLSQLFKPGLRKALVIGILLALFNQVIGMNAITYYGPEIFKMMGFGQNAGFVTTCIVGVVEVIFTVIAVLLIDKVGRKKLMSIGSAFMAIFMILIGTSFYFELTSGIMMIVLILGFVAAFCVSVGPITWIMISEIFPNHLRARAAGIATIFLWGANWAIGQFVPMMIDSFGLAYTFWIFAVINILCFLFVVTICPETKNKSLEEIEKLWIK.

12 helical membrane passes run 21–43 (GFVI…DTAV), 63–85 (GLVI…FLSD), 92–111 (ILMT…ALSQ), 116–138 (LIIA…VTYI), 150–172 (LSSL…NLAV), 185–207 (GWRW…LLVV), 266–288 (ALVI…ITYY), 303–325 (GFVT…VLLI), 332–354 (KLMS…SFYF), 364–386 (VLIL…IMIS), 398–420 (AGIA…PMMI), and 424–446 (GLAY…VVTI).

Belongs to the major facilitator superfamily. Sugar transporter (TC 2.A.1.1) family.

The protein localises to the cell membrane. It carries out the reaction L-arabinose(in) + H(+)(in) = L-arabinose(out) + H(+)(out). It catalyses the reaction D-galactose(in) + H(+)(in) = D-galactose(out) + H(+)(out). The enzyme catalyses D-xylose(in) + H(+)(in) = D-xylose(out) + H(+)(out). In terms of biological role, uptake of L-arabinose across the cytoplasmic membrane with the concomitant transport of protons into the cell (symport system). In the presence of inducing amounts of L-arabinose, can import both D-galactose and D-xylose. Can also transport the disaccharide alpha-1,5-arabinobiose. The sequence is that of Arabinose-proton symporter (araE) from Bacillus subtilis (strain 168).